The following is a 483-amino-acid chain: Probable zinc metalloprotease PTT_08196 (483 aa).

The first 18 residues, 1 to 18, serve as a signal peptide directing secretion; the sequence is MLFRSVILSNALLLPACA. N-linked (GlcNAc...) asparagine glycosylation is found at N96 and N121. Zn(2+)-binding residues include H167, D187, and E220. A glycan (N-linked (GlcNAc...) asparagine) is linked at N235. D247 is a binding site for Zn(2+). 5 N-linked (GlcNAc...) asparagine glycosylation sites follow: N310, N362, N401, N411, and N421. The Fibronectin type-III domain maps to 396-483; sequence PAMPRNVTID…KSPAVYPFPA (88 aa).

It belongs to the peptidase M28 family. M28B subfamily. It depends on Zn(2+) as a cofactor.

It localises to the secreted. This chain is Probable zinc metalloprotease PTT_08196, found in Pyrenophora teres f. teres (strain 0-1) (Barley net blotch fungus).